The chain runs to 597 residues: Zinc finger CCCH domain-containing protein 29 (597 aa).

2 ANK repeats span residues 76 to 106 (EERT…DVNR) and 111 to 143 (EKVT…SPNC). 2 consecutive C3H1-type zinc fingers follow at residues 254 to 281 (PYTC…HGVF) and 289 to 313 (QYRT…HRRD). Over residues 320 to 337 (ASTGSAMVSPRSSNQSPE) the composition is skewed to polar residues. The segment at 320–341 (ASTGSAMVSPRSSNQSPEMSVM) is disordered.

As to expression, expressed in roots and anthers.

The protein localises to the nucleus. In terms of biological role, involved in salt stress response. May positively modulate plant tolerance to salt stress. The sequence is that of Zinc finger CCCH domain-containing protein 29 from Arabidopsis thaliana (Mouse-ear cress).